We begin with the raw amino-acid sequence, 99 residues long: Sarcosine oxidase subunit delta (99 aa).

Zn(2+)-binding residues include Cys6, Cys9, His59, and Cys63.

It belongs to the SoxD family. In terms of assembly, heterotetramer composed of subunits alpha (SoxA), beta (SoxB), gamma (SoxG) and delta (SoxD).

The protein resides in the cytoplasm. The enzyme catalyses sarcosine + (6S)-5,6,7,8-tetrahydrofolate + O2 = (6R)-5,10-methylene-5,6,7,8-tetrahydrofolate + glycine + H2O2. The catalysed reaction is sarcosine + O2 + H2O = formaldehyde + glycine + H2O2. Its activity is regulated as follows. Inhibited by Zn(2+), Cu(2+), Cd(2+), Hg(2+), Ag(+), p-chloromercuribenzoate (p-CMB), iodoacetamide, N-ethylmaleimide, CN(-), o-phenanthroline and sodium lauryl sulfate. In the presence of tetrahydrofolate, catalyzes the oxidative demethylation of sarcosine to yield glycine, 5,10-methylenetetrahydrofolate and hydrogen peroxide. In the absence of tetrahydrofolate, catalyzes the oxidative demethylation of sarcosine to yield glycine, formaldehyde and hydrogen peroxide. Can also use N-methyl-L-alanine and N-ethyl-L-glycine. Is very specific for oxygen as an acceptor. This chain is Sarcosine oxidase subunit delta, found in Corynebacterium sp. (strain U-96).